Consider the following 692-residue polypeptide: Formate hydrogenlyase transcriptional activator (692 aa).

The GAF domain occupies 202–344 (DIDELVSEVA…QIAERVAIAV (143 aa)). The Sigma-54 factor interaction domain occupies 381–610 (IIGRSEAMYN…LENVVERAVL (230 aa)). ATP contacts are provided by residues 409–416 (GETGTGKE) and 472–481 (ADKSSLFLDE). A DNA-binding region (H-T-H motif) is located at residues 663 to 682 (PKGAAQRLGLKRTTLLSRMK).

Functionally, required for induction of expression of the formate dehydrogenase H and hydrogenase-3 structural genes. In Salmonella typhimurium (strain LT2 / SGSC1412 / ATCC 700720), this protein is Formate hydrogenlyase transcriptional activator (fhlA).